Reading from the N-terminus, the 385-residue chain is Leucine aminopeptidase 1 (385 aa).

Residues 1–19 (MKFPSFLSLGIAASTTALA) form the signal peptide. A propeptide spanning residues 20-87 (ALPDQKPIGD…FPRAFAKTAV (68 aa)) is cleaved from the precursor. Asn-177 carries an N-linked (GlcNAc...) asparagine glycan. Zn(2+)-binding residues include His-185 and Asp-204. N-linked (GlcNAc...) asparagine glycosylation is present at Asn-229. Positions 243 and 270 each coordinate Zn(2+). Cys-319 and Cys-323 are disulfide-bonded. His-352 provides a ligand contact to Zn(2+).

The protein belongs to the peptidase M28 family. M28E subfamily. As to quaternary structure, monomer. Requires Zn(2+) as cofactor.

The protein resides in the secreted. Its function is as follows. Extracellular aminopeptidase that allows assimilation of proteinaceous substrates. This chain is Leucine aminopeptidase 1 (LAP1), found in Ajellomyces dermatitidis (strain ER-3 / ATCC MYA-2586) (Blastomyces dermatitidis).